The primary structure comprises 107 residues: Monogrin 2 (107 aa).

The signal sequence occupies residues 1-20; that stretch reads MEGKVLLCFALLLPFTVAQA. 3 disulfide bridges follow: cysteine 28–cysteine 82, cysteine 36–cysteine 62, and cysteine 55–cysteine 78. Positions 29-82 constitute a BPTI/Kunitz inhibitor domain; the sequence is GYLMMQRCRGDTTETKAWGFNYEEKKCQKETVICGTGGAPRNAFETKKDCDALC. The Cell attachment site signature appears at 37–39; the sequence is RGD.

The N-terminus is blocked. In terms of tissue distribution, expressed in salivary glands.

The protein localises to the cytoplasmic vesicle. It is found in the secretory vesicle. It localises to the secreted. Tick salivary platelet aggregation inhibitor that plays an important part in the anti-hemostatic strategy of ticks. Inhibits platelet aggregation induced by ADP (IC(50)~150 nM), collagen, and platelet activating factor (PAF). Acts by binding to platelet membrane glycoprotein IIb-IIIa (ITGA2B/ITGB3) in a metal ion dependent manner. Does not inhibit aggregation induced by ristocecin, an agonist that aggregates platelets independently from the glycoprotein IIb-IIIa (ITGA2B/ITGB3). In contrast to other tick platelet aggregation inhibitors, this protein does not protect ITGA2B/ITGB3 from dissociation under SDS condition, suggesting it may dissocate much faster than its orthologs. This Argas monolakensis (Mono lake bird tick) protein is Monogrin 2.